Consider the following 326-residue polypeptide: MSTLEFIKECQEKVFSGNHITAEDAEKLLNIPEENLKDLARCANEITRDFNGEKVDVEQLNNIKKNACSEDCTFCGQSAFFDTGIETYQLPSPEEVVSKAQKAKEEGAESYCLVAAWREPSRTDFEKVCKIITEINDKVGISVECSLGFLTQEQAKKLKDLKVKRYNHNLETAKSKFPEICTTHTYEDRLETLGIARDAGLELCTGGIIGLGETREQRLELTLELARLYPEEVTINILVPVPGTPLELQTDLPNSEIVRMFSVIRFLLPESVIKISGGRETNLEDSGEELLQSGANGIITSGYLTMGGNEAQKDHAMIEKIGLKSQ.

One can recognise a Radical SAM core domain in the interval Phe-50 to Arg-279. Residues Cys-68, Cys-72, and Cys-75 each contribute to the [4Fe-4S] cluster site. Residues Cys-112, Cys-145, Cys-204, and Lys-274 each coordinate [2Fe-2S] cluster.

The protein belongs to the radical SAM superfamily. Biotin synthase family. As to quaternary structure, homodimer. [4Fe-4S] cluster is required as a cofactor. Requires [2Fe-2S] cluster as cofactor.

The enzyme catalyses (4R,5S)-dethiobiotin + (sulfur carrier)-SH + 2 reduced [2Fe-2S]-[ferredoxin] + 2 S-adenosyl-L-methionine = (sulfur carrier)-H + biotin + 2 5'-deoxyadenosine + 2 L-methionine + 2 oxidized [2Fe-2S]-[ferredoxin]. It functions in the pathway cofactor biosynthesis; biotin biosynthesis; biotin from 7,8-diaminononanoate: step 2/2. Catalyzes the conversion of dethiobiotin (DTB) to biotin by the insertion of a sulfur atom into dethiobiotin via a radical-based mechanism. The chain is Biotin synthase from Nitrosopumilus maritimus (strain SCM1).